Reading from the N-terminus, the 207-residue chain is Transcription factor bHLH149 (207 aa).

Residues 1–25 (MVESLFPSIENTGESSRRKKPRISE) are disordered. Residues 132–181 (KSRKGLTETNRIKLPAVERKLKILGRLVPGCRKVSVPNLLDEATDYIAAL) enclose the bHLH domain.

As to quaternary structure, homodimer. Interacts with PRE3.

The protein resides in the nucleus. Atypical bHLH transcription factor probably unable to bind DNA. Negatively regulates brassinosteroid signaling. This is Transcription factor bHLH149 (BHLH149) from Arabidopsis thaliana (Mouse-ear cress).